The chain runs to 644 residues: Threonine--tRNA ligase (644 aa).

A TGS domain is found at 1–61 (MVAITLPDGS…VADAKVEIVT (61 aa)). The interval 242 to 533 (DHRKIGKALN…LIENYAGWMP (292 aa)) is catalytic. Positions 333, 384, and 510 each coordinate Zn(2+).

Belongs to the class-II aminoacyl-tRNA synthetase family. In terms of assembly, homodimer. The cofactor is Zn(2+).

It localises to the cytoplasm. It catalyses the reaction tRNA(Thr) + L-threonine + ATP = L-threonyl-tRNA(Thr) + AMP + diphosphate + H(+). In terms of biological role, catalyzes the attachment of threonine to tRNA(Thr) in a two-step reaction: L-threonine is first activated by ATP to form Thr-AMP and then transferred to the acceptor end of tRNA(Thr). Also edits incorrectly charged L-seryl-tRNA(Thr). The chain is Threonine--tRNA ligase from Psychrobacter arcticus (strain DSM 17307 / VKM B-2377 / 273-4).